A 215-amino-acid polypeptide reads, in one-letter code: Large ribosomal subunit protein uL3 (215 aa).

The segment at 136–155 (GVSISHRSHGSTGQRQDPGK) is disordered. Gln151 carries the post-translational modification N5-methylglutamine.

It belongs to the universal ribosomal protein uL3 family. Part of the 50S ribosomal subunit. Forms a cluster with proteins L14 and L19. Methylated by PrmB.

One of the primary rRNA binding proteins, it binds directly near the 3'-end of the 23S rRNA, where it nucleates assembly of the 50S subunit. The sequence is that of Large ribosomal subunit protein uL3 from Rickettsia typhi (strain ATCC VR-144 / Wilmington).